A 396-amino-acid polypeptide reads, in one-letter code: Acetate kinase (396 aa).

Residue Asn-6 participates in Mg(2+) binding. Residue Lys-13 participates in ATP binding. Residue Arg-89 coordinates substrate. Asp-145 acts as the Proton donor/acceptor in catalysis. ATP contacts are provided by residues 205–209 (HLGNG), 280–282 (DMR), and 329–333 (GVGEN). Residue Glu-383 coordinates Mg(2+).

The protein belongs to the acetokinase family. As to quaternary structure, homodimer. It depends on Mg(2+) as a cofactor. The cofactor is Mn(2+).

The protein localises to the cytoplasm. It carries out the reaction acetate + ATP = acetyl phosphate + ADP. Its pathway is metabolic intermediate biosynthesis; acetyl-CoA biosynthesis; acetyl-CoA from acetate: step 1/2. In terms of biological role, catalyzes the formation of acetyl phosphate from acetate and ATP. Can also catalyze the reverse reaction. This is Acetate kinase from Mesoplasma florum (strain ATCC 33453 / NBRC 100688 / NCTC 11704 / L1) (Acholeplasma florum).